The following is a 492-amino-acid chain: V-type proton ATPase subunit B 1 (492 aa).

The protein belongs to the ATPase alpha/beta chains family. V-ATPase is a heteromultimeric enzyme composed of a peripheral catalytic V1 complex (main components: subunits A, B, C, D, E, and F) attached to an integral membrane V0 proton pore complex (main component: the proteolipid protein).

Functionally, non-catalytic subunit of the peripheral V1 complex of vacuolar ATPase. V-ATPase is responsible for acidifying a variety of intracellular compartments in eukaryotic cells. The sequence is that of V-type proton ATPase subunit B 1 from Acetabularia acetabulum (Mermaid's wine glass).